The sequence spans 419 residues: Serine hydroxymethyltransferase (419 aa).

(6S)-5,6,7,8-tetrahydrofolate-binding positions include Leu121 and 125–127 (GHL). N6-(pyridoxal phosphate)lysine is present on Lys229. A (6S)-5,6,7,8-tetrahydrofolate-binding site is contributed by 354–356 (SPF).

This sequence belongs to the SHMT family. As to quaternary structure, homodimer. Requires pyridoxal 5'-phosphate as cofactor.

It is found in the cytoplasm. The catalysed reaction is (6R)-5,10-methylene-5,6,7,8-tetrahydrofolate + glycine + H2O = (6S)-5,6,7,8-tetrahydrofolate + L-serine. It functions in the pathway one-carbon metabolism; tetrahydrofolate interconversion. Its pathway is amino-acid biosynthesis; glycine biosynthesis; glycine from L-serine: step 1/1. Its function is as follows. Catalyzes the reversible interconversion of serine and glycine with tetrahydrofolate (THF) serving as the one-carbon carrier. This reaction serves as the major source of one-carbon groups required for the biosynthesis of purines, thymidylate, methionine, and other important biomolecules. Also exhibits THF-independent aldolase activity toward beta-hydroxyamino acids, producing glycine and aldehydes, via a retro-aldol mechanism. The chain is Serine hydroxymethyltransferase from Coxiella burnetii (strain CbuK_Q154) (Coxiella burnetii (strain Q154)).